Reading from the N-terminus, the 596-residue chain is Proteasome-associated ATPase (596 aa).

Residues 12 to 94 (SRWERETQDL…KEEIDRLAQP (83 aa)) are a coiled coil. Residue 280–285 (GCGKTL) coordinates ATP. Residues 595 to 596 (YL) are docks into pockets in the proteasome alpha-ring.

Belongs to the AAA ATPase family. Homohexamer. Assembles into a hexameric ring structure that caps the 20S proteasome core. Strongly interacts with the prokaryotic ubiquitin-like protein Pup through a hydrophobic interface; the interacting region of ARC lies in its N-terminal coiled-coil domain. There is one Pup binding site per ARC hexamer ring. Upon ATP-binding, the C-terminus of ARC interacts with the alpha-rings of the proteasome core, possibly by binding to the intersubunit pockets.

It participates in protein degradation; proteasomal Pup-dependent pathway. In terms of biological role, ATPase which is responsible for recognizing, binding, unfolding and translocation of pupylated proteins into the bacterial 20S proteasome core particle. May be essential for opening the gate of the 20S proteasome via an interaction with its C-terminus, thereby allowing substrate entry and access to the site of proteolysis. Thus, the C-termini of the proteasomal ATPase may function like a 'key in a lock' to induce gate opening and therefore regulate proteolysis. The sequence is that of Proteasome-associated ATPase from Stackebrandtia nassauensis (strain DSM 44728 / CIP 108903 / NRRL B-16338 / NBRC 102104 / LLR-40K-21).